A 481-amino-acid chain; its full sequence is 3-isopropylmalate dehydratase large subunit (481 aa).

Positions 357, 417, and 420 each coordinate [4Fe-4S] cluster.

It belongs to the aconitase/IPM isomerase family. LeuC type 1 subfamily. Heterodimer of LeuC and LeuD. [4Fe-4S] cluster is required as a cofactor.

The enzyme catalyses (2R,3S)-3-isopropylmalate = (2S)-2-isopropylmalate. Its pathway is amino-acid biosynthesis; L-leucine biosynthesis; L-leucine from 3-methyl-2-oxobutanoate: step 2/4. Its function is as follows. Catalyzes the isomerization between 2-isopropylmalate and 3-isopropylmalate, via the formation of 2-isopropylmaleate. This chain is 3-isopropylmalate dehydratase large subunit, found in Mycolicibacterium vanbaalenii (strain DSM 7251 / JCM 13017 / BCRC 16820 / KCTC 9966 / NRRL B-24157 / PYR-1) (Mycobacterium vanbaalenii).